A 135-amino-acid chain; its full sequence is Galectin-1 (135 aa).

Residue Ala2 is modified to N-acetylalanine. Positions 4 to 135 (GLVASNLNLK…DFKIKCVAFE (132 aa)) constitute a Galectin domain. 3 positions are modified to N6-acetyllysine: Lys13, Lys19, and Lys29. Ser30 is modified (phosphoserine). A beta-D-galactoside contacts are provided by residues 45–49 (HFNPR), His53, Asn62, and 69–72 (WGTE). Residue Lys108 is modified to N6-acetyllysine; alternate. Lys108 bears the N6-succinyllysine; alternate mark. At Lys128 the chain carries N6-acetyllysine.

As to quaternary structure, binds LGALS3BP. Interacts with CD2, CD3, CD4, CD6, CD7, CD43, ALCAM and CD45. Interacts with laminin. Interacts with SUSD2. Exists in a reversible and active monomer-homodimer equilibrium, the mononomer/dimer state is regulated by lectin concentration. Interacts with cargo receptor TMED10; the interaction mediates the translocation from the cytoplasm into the ERGIC (endoplasmic reticulum-Golgi intermediate compartment) and thereby secretion.

Its subcellular location is the cytoplasm. It is found in the secreted. It localises to the extracellular space. The protein localises to the extracellular matrix. Lectin that binds beta-galactoside and a wide array of complex carbohydrates. Plays a role in regulating apoptosis, cell proliferation and cell differentiation. Inhibits CD45 protein phosphatase activity and therefore the dephosphorylation of Lyn kinase. Strong inducer of T-cell apoptosis. In Cricetulus griseus (Chinese hamster), this protein is Galectin-1 (LGALS1).